The following is a 642-amino-acid chain: Pheromone-processing carboxypeptidase KEX1 (642 aa).

The N-terminal stretch at 1–19 (MSLWLFFVQTVLLIQCALG) is a signal peptide. Residues 20-544 (GLPNAKDYLV…HKDRHRNSDK (525 aa)) are Lumenal-facing. Asn80 is a glycosylation site (N-linked (GlcNAc...) asparagine). Residues Ser189 and Asp406 contribute to the active site. N-linked (GlcNAc...) asparagine glycosylation is found at Asn425, Asn459, and Asn467. His470 is an active-site residue. Residues 515-539 (HSTGEEELSADQKQDEDENSHKDRH) form a disordered region. Residues 519 to 532 (EEELSADQKQDEDE) are compositionally biased toward acidic residues. A helical transmembrane segment spans residues 545–565 (FEIAVILLVVFSITGTIAYYF). Topologically, residues 566-642 (LRERFRKQIH…DDDSFELDNL (77 aa)) are cytoplasmic. The disordered stretch occupies residues 609–642 (IDEAPSTADKPAKNKSGYTKVPNTDDDSFELDNL). Acidic residues predominate over residues 632-642 (TDDDSFELDNL).

This sequence belongs to the peptidase S10 family.

The protein resides in the golgi apparatus. Its subcellular location is the trans-Golgi network membrane. The enzyme catalyses Preferential release of a C-terminal arginine or lysine residue.. In terms of biological role, protease with a carboxypeptidase B-like function involved in the C-terminal processing of the lysine and arginine residues from protein precursors. Promotes cell fusion and is involved in the programmed cell death. The chain is Pheromone-processing carboxypeptidase KEX1 (KEX1) from Kluyveromyces lactis (strain ATCC 8585 / CBS 2359 / DSM 70799 / NBRC 1267 / NRRL Y-1140 / WM37) (Yeast).